Here is a 163-residue protein sequence, read N- to C-terminus: MRAVIQKTVGAKVDVVSEAGTETCGKIDGGFVVLLGVTHSDTEKDARYIADKIAHLRVFEDEAGKLNLSLKDVGGAVLLVSQFTLYADAASGRRPSFSQAAPAEQAQQLYLRTAELLRGHGIHVETGRFRTHMQVSLCNDGPVTILLDSFMTRISPKMKVVPD.

The Gly-cisPro motif, important for rejection of L-amino acids signature appears at 141 to 142 (GP).

It belongs to the DTD family. In terms of assembly, homodimer.

The protein resides in the cytoplasm. The catalysed reaction is glycyl-tRNA(Ala) + H2O = tRNA(Ala) + glycine + H(+). The enzyme catalyses a D-aminoacyl-tRNA + H2O = a tRNA + a D-alpha-amino acid + H(+). Functionally, an aminoacyl-tRNA editing enzyme that deacylates mischarged D-aminoacyl-tRNAs. Also deacylates mischarged glycyl-tRNA(Ala), protecting cells against glycine mischarging by AlaRS. Acts via tRNA-based rather than protein-based catalysis; rejects L-amino acids rather than detecting D-amino acids in the active site. By recycling D-aminoacyl-tRNA to D-amino acids and free tRNA molecules, this enzyme counteracts the toxicity associated with the formation of D-aminoacyl-tRNA entities in vivo and helps enforce protein L-homochirality. This Neisseria meningitidis serogroup B (strain ATCC BAA-335 / MC58) protein is D-aminoacyl-tRNA deacylase.